We begin with the raw amino-acid sequence, 198 residues long: Fimbriae W protein (198 aa).

An HTH luxR-type domain is found at 127–192 (HYCTTRHFSV…QFLKYIRVNL (66 aa)).

The protein resides in the fimbrium. The sequence is that of Fimbriae W protein (fimW) from Salmonella typhimurium (strain LT2 / SGSC1412 / ATCC 700720).